We begin with the raw amino-acid sequence, 256 residues long: Hydroxyacylglutathione hydrolase (256 aa).

Histidine 55, histidine 57, aspartate 59, histidine 60, histidine 113, aspartate 130, and histidine 168 together coordinate Zn(2+).

Belongs to the metallo-beta-lactamase superfamily. Glyoxalase II family. Monomer. Requires Zn(2+) as cofactor.

It carries out the reaction an S-(2-hydroxyacyl)glutathione + H2O = a 2-hydroxy carboxylate + glutathione + H(+). It functions in the pathway secondary metabolite metabolism; methylglyoxal degradation; (R)-lactate from methylglyoxal: step 2/2. Its function is as follows. Thiolesterase that catalyzes the hydrolysis of S-D-lactoyl-glutathione to form glutathione and D-lactic acid. This chain is Hydroxyacylglutathione hydrolase, found in Alkalilimnicola ehrlichii (strain ATCC BAA-1101 / DSM 17681 / MLHE-1).